Reading from the N-terminus, the 423-residue chain is Serine incorporator 5 (423 aa).

Residues 1-36 (MSAQCCAGQLACCCGSAGCSLCCDCCPRIRQSLSTR) are Extracellular-facing. The chain crosses the membrane as a helical span at residues 37 to 57 (FMYALYFILVVVLCCIMMSTT). At 58–89 (VAHKMKEHIPFFEDMCKGIKAGDTCEKLVGYS) the chain is on the cytoplasmic side. Residues 90–110 (AVYRVCFGMACFFFIFCLLTL) traverse the membrane as a helical segment. Residues 111-124 (KINNSKSCRAHIHN) lie on the Extracellular side of the membrane. Asn113 carries N-linked (GlcNAc...) asparagine glycosylation. Residues 125–145 (GFWFFKLLLLGAMCSGAFFIP) form a helical membrane-spanning segment. The Cytoplasmic portion of the chain corresponds to 146–156 (DQDTFLNAWRY). Residues 157-177 (VGAVGGFLFIGIQLLLLVEFA) form a helical membrane-spanning segment. Residues 178–198 (HKWNKNWTAGTASNKLWYASL) lie on the Extracellular side of the membrane. Asn183 carries an N-linked (GlcNAc...) asparagine glycan. Residues 199 to 219 (ALVTLIMYSIATGGLVLMAVF) form a helical membrane-spanning segment. Residues 220-230 (YTQKDSCMENK) are Cytoplasmic-facing. A helical transmembrane segment spans residues 231 to 251 (ILLGVNGGLCLLISLVAISPW). Topologically, residues 252–258 (VQNRQPH) are extracellular. The chain crosses the membrane as a helical span at residues 259 to 279 (SGLLQSGVISCYVTYLTFSAL). Residues 280–311 (SSKPAEVVLDEHGKNVTICVPDFGQDLYRDEN) lie on the Cytoplasmic side of the membrane. The chain crosses the membrane as a helical span at residues 312–332 (LVTILGTSLLIGCILYSCLTS). Residues 333 to 385 (TTRSSSDALQGRYAAPELEIARCCFCFSPGGEDTEEQQPGKEGPRVIYDEKKG) lie on the Extracellular side of the membrane. The helical transmembrane segment at 386 to 406 (TVYIYSYFHFVFFLASLYVMM) threads the bilayer. The Cytoplasmic portion of the chain corresponds to 407–423 (TVTNWFNHVRSAFHLLP).

The protein belongs to the TDE1 family. Highly expressed in placenta, skeletal muscle, spleen, thymus, testis and peripheral leukocyte and is expressed weakly in the heart, liver and fetal brain.

The protein localises to the cell membrane. The protein resides in the cytoplasm. It localises to the perinuclear region. It carries out the reaction a 1,2-diacyl-sn-glycero-3-phospho-L-serine(in) = a 1,2-diacyl-sn-glycero-3-phospho-L-serine(out). The enzyme catalyses a 1,2-diacyl-sn-glycero-3-phosphocholine(in) = a 1,2-diacyl-sn-glycero-3-phosphocholine(out). The catalysed reaction is a 1,2-diacyl-sn-glycero-3-phosphoethanolamine(in) = a 1,2-diacyl-sn-glycero-3-phosphoethanolamine(out). Its function is as follows. Restriction factor required to restrict infectivity of lentiviruses, such as HIV-1: acts by inhibiting an early step of viral infection. Impairs the penetration of the viral particle into the cytoplasm. Non-ATP-dependent, non-specific lipid transporter for phosphatidylserine, phosphatidylcholine, and phosphatidylethanolamine. Functions as a scramblase that flips lipids in both directions across the membrane. Phospholipid scrambling results in HIV-1 surface exposure of phosphatidylserine and loss of membrane asymmetry, which leads to changes in HIV-1 Env conformation and loss of infectivity. Enhances the incorporation of serine into phosphatidylserine and sphingolipids. May play a role in providing serine molecules for the formation of myelin glycosphingolipids in oligodendrocytes. The polypeptide is Serine incorporator 5 (Homo sapiens (Human)).